An 852-amino-acid polypeptide reads, in one-letter code: Chitin synthase 1 (852 aa).

2 disordered regions span residues 27–46 and 53–97; these read EDQD…TNYA and SSLR…QANG. Over residues 53 to 74 the composition is skewed to polar residues; the sequence is SSLRSQKSANKPTTAQNRNSAA. 7 consecutive transmembrane segments (helical) span residues 492 to 509, 532 to 552, 572 to 592, 601 to 621, 686 to 706, 787 to 807, and 830 to 850; these read RWLN…IHFR, VISL…FYFI, IFDF…ICSM, FLFM…LFCS, FLPY…YAFC, THLV…ITTS, and CGLG…GIFT.

The protein belongs to the chitin synthase family. Class II subfamily.

The protein localises to the cell membrane. It carries out the reaction [(1-&gt;4)-N-acetyl-beta-D-glucosaminyl](n) + UDP-N-acetyl-alpha-D-glucosamine = [(1-&gt;4)-N-acetyl-beta-D-glucosaminyl](n+1) + UDP + H(+). Polymerizes chitin, a structural polymer of the cell wall and septum, by transferring the sugar moiety of UDP-GlcNAc to the non-reducing end of the growing chitin polymer. The protein is Chitin synthase 1 (CHS1) of Mucor circinelloides f. lusitanicus (Mucor racemosus var. lusitanicus).